A 341-amino-acid polypeptide reads, in one-letter code: Phenylalanine--tRNA ligase alpha subunit (341 aa).

Glutamate 256 is a Mg(2+) binding site.

Belongs to the class-II aminoacyl-tRNA synthetase family. Phe-tRNA synthetase alpha subunit type 1 subfamily. In terms of assembly, tetramer of two alpha and two beta subunits. The cofactor is Mg(2+).

It localises to the cytoplasm. The enzyme catalyses tRNA(Phe) + L-phenylalanine + ATP = L-phenylalanyl-tRNA(Phe) + AMP + diphosphate + H(+). This is Phenylalanine--tRNA ligase alpha subunit from Leptospira biflexa serovar Patoc (strain Patoc 1 / Ames).